Consider the following 269-residue polypeptide: GTP cyclohydrolase FolE2 (269 aa).

It belongs to the GTP cyclohydrolase IV family.

The enzyme catalyses GTP + H2O = 7,8-dihydroneopterin 3'-triphosphate + formate + H(+). The protein operates within cofactor biosynthesis; 7,8-dihydroneopterin triphosphate biosynthesis; 7,8-dihydroneopterin triphosphate from GTP: step 1/1. Its function is as follows. Converts GTP to 7,8-dihydroneopterin triphosphate. This chain is GTP cyclohydrolase FolE2, found in Burkholderia ambifaria (strain ATCC BAA-244 / DSM 16087 / CCUG 44356 / LMG 19182 / AMMD) (Burkholderia cepacia (strain AMMD)).